The chain runs to 417 residues: NADH-quinone oxidoreductase subunit D (417 aa).

The protein belongs to the complex I 49 kDa subunit family. In terms of assembly, NDH-1 is composed of 14 different subunits. Subunits NuoB, C, D, E, F, and G constitute the peripheral sector of the complex.

The protein localises to the cell membrane. It carries out the reaction a quinone + NADH + 5 H(+)(in) = a quinol + NAD(+) + 4 H(+)(out). Its function is as follows. NDH-1 shuttles electrons from NADH, via FMN and iron-sulfur (Fe-S) centers, to quinones in the respiratory chain. The immediate electron acceptor for the enzyme in this species is believed to be ubiquinone. Couples the redox reaction to proton translocation (for every two electrons transferred, four hydrogen ions are translocated across the cytoplasmic membrane), and thus conserves the redox energy in a proton gradient. The chain is NADH-quinone oxidoreductase subunit D from Polynucleobacter asymbioticus (strain DSM 18221 / CIP 109841 / QLW-P1DMWA-1) (Polynucleobacter necessarius subsp. asymbioticus).